We begin with the raw amino-acid sequence, 396 residues long: Coiled-coil domain-containing protein 1 (396 aa).

The N-terminal stretch at Met-1–Gly-21 is a signal peptide. Coiled-coil stretches lie at residues Lys-53–Asp-73, Glu-109–Asp-129, Asp-208–Thr-242, and Tyr-287–His-308. Positions Asp-231–Asp-256 are enriched in acidic residues. Disordered stretches follow at residues Asp-231 to His-260 and Glu-288 to Asp-378.

In terms of tissue distribution, component of the acid-insoluble and acid-soluble organic matrix of calcified layers of the shell (at protein level).

The protein resides in the secreted. In Lottia gigantea (Giant owl limpet), this protein is Coiled-coil domain-containing protein 1.